Here is a 494-residue protein sequence, read N- to C-terminus: DnaJ-related protein rsp1 (494 aa).

In terms of domain architecture, J spans 12–78; that stretch reads DYYTILGAES…KLRELFDQRR (67 aa). Residues 229 to 242 are compositionally biased toward polar residues; sequence SEISNGLNSNGVEN. The disordered stretch occupies residues 229–354; sequence SEISNGLNSN…NDSTSNSTEY (126 aa). A compositionally biased stretch (low complexity) spans 243-256; it reads SSITKSSPRSSSSS. Over residues 270–287 the composition is skewed to polar residues; the sequence is IFTSPNTPEHPSVYQTDI. Over residues 321 to 331 the composition is skewed to low complexity; that stretch reads LSRSKSSSLSR. A compositionally biased stretch (polar residues) spans 332–354; that stretch reads NQTRSQLNDLSAENDSTSNSTEY.

As to quaternary structure, interacts iwth ssa1.

Its subcellular location is the cytoplasm. The protein resides in the cytoskeleton. It localises to the nucleus. Its function is as follows. Has a role in the proper organization of the interphase microtubule cytoskeleton. Required for equatorial microtubule organizing center (eMTOC) disassembly into satellites, contributing to the dynamic redistribution of MTOC components for organization of interphase microtubules. The protein is DnaJ-related protein rsp1 (rsp1) of Schizosaccharomyces pombe (strain 972 / ATCC 24843) (Fission yeast).